The sequence spans 364 residues: DNA polymerase IV (364 aa).

One can recognise a UmuC domain in the interval 8-189 (IIHIDMDCYF…LPLTKIPGVG (182 aa)). 2 residues coordinate Mg(2+): Asp12 and Asp107. Glu108 is a catalytic residue.

It belongs to the DNA polymerase type-Y family. In terms of assembly, monomer. It depends on Mg(2+) as a cofactor.

It localises to the cytoplasm. The enzyme catalyses DNA(n) + a 2'-deoxyribonucleoside 5'-triphosphate = DNA(n+1) + diphosphate. In terms of biological role, poorly processive, error-prone DNA polymerase involved in untargeted mutagenesis. Copies undamaged DNA at stalled replication forks, which arise in vivo from mismatched or misaligned primer ends. These misaligned primers can be extended by PolIV. Exhibits no 3'-5' exonuclease (proofreading) activity. May be involved in translesional synthesis, in conjunction with the beta clamp from PolIII. This is DNA polymerase IV from Shewanella woodyi (strain ATCC 51908 / MS32).